Reading from the N-terminus, the 1209-residue chain is DNA-directed RNA polymerase subunit beta'' (1209 aa).

Residues C233, C308, C315, and C318 each coordinate Zn(2+).

The protein belongs to the RNA polymerase beta' chain family. RpoC2 subfamily. As to quaternary structure, in plastids the minimal PEP RNA polymerase catalytic core is composed of four subunits: alpha, beta, beta', and beta''. When a (nuclear-encoded) sigma factor is associated with the core the holoenzyme is formed, which can initiate transcription. Requires Zn(2+) as cofactor.

It localises to the plastid. The protein resides in the chloroplast. The enzyme catalyses RNA(n) + a ribonucleoside 5'-triphosphate = RNA(n+1) + diphosphate. Functionally, DNA-dependent RNA polymerase catalyzes the transcription of DNA into RNA using the four ribonucleoside triphosphates as substrates. This chain is DNA-directed RNA polymerase subunit beta'', found in Pinus koraiensis (Korean pine).